Here is a 364-residue protein sequence, read N- to C-terminus: Aminomethyltransferase (364 aa).

Belongs to the GcvT family. The glycine cleavage system is composed of four proteins: P, T, L and H.

The catalysed reaction is N(6)-[(R)-S(8)-aminomethyldihydrolipoyl]-L-lysyl-[protein] + (6S)-5,6,7,8-tetrahydrofolate = N(6)-[(R)-dihydrolipoyl]-L-lysyl-[protein] + (6R)-5,10-methylene-5,6,7,8-tetrahydrofolate + NH4(+). Its function is as follows. The glycine cleavage system catalyzes the degradation of glycine. The chain is Aminomethyltransferase from Shewanella pealeana (strain ATCC 700345 / ANG-SQ1).